The chain runs to 389 residues: Ribosomal RNA large subunit methyltransferase M (389 aa).

Positions 1–13 are enriched in polar residues; that stretch reads MIGNARMSQKYPT. The segment at 1–24 is disordered; that stretch reads MIGNARMSQKYPTSSSRKRSPLSS. S-adenosyl-L-methionine contacts are provided by residues Ser214, 247 to 250, Asp266, Asp286, and Asp302; that span reads APGG. Lys331 acts as the Proton acceptor in catalysis.

It belongs to the class I-like SAM-binding methyltransferase superfamily. RNA methyltransferase RlmE family. RlmM subfamily. As to quaternary structure, monomer.

Its subcellular location is the cytoplasm. It carries out the reaction cytidine(2498) in 23S rRNA + S-adenosyl-L-methionine = 2'-O-methylcytidine(2498) in 23S rRNA + S-adenosyl-L-homocysteine + H(+). Functionally, catalyzes the 2'-O-methylation at nucleotide C2498 in 23S rRNA. In Hahella chejuensis (strain KCTC 2396), this protein is Ribosomal RNA large subunit methyltransferase M.